The primary structure comprises 448 residues: Ribosomal protein uS12 methylthiotransferase RimO (448 aa).

Positions 16-126 (PKISFVSLGC…VVAAVHEAVP (111 aa)) constitute an MTTase N-terminal domain. 6 residues coordinate [4Fe-4S] cluster: Cys-25, Cys-61, Cys-90, Cys-157, Cys-161, and Cys-164. Residues 143 to 380 (LTPRHYAYLK…METQNGIALR (238 aa)) form the Radical SAM core domain. In terms of domain architecture, TRAM spans 383 to 448 (RAKVGKRLPV…EAYDLYGSVA (66 aa)).

Belongs to the methylthiotransferase family. RimO subfamily. [4Fe-4S] cluster is required as a cofactor.

The protein resides in the cytoplasm. The catalysed reaction is L-aspartate(89)-[ribosomal protein uS12]-hydrogen + (sulfur carrier)-SH + AH2 + 2 S-adenosyl-L-methionine = 3-methylsulfanyl-L-aspartate(89)-[ribosomal protein uS12]-hydrogen + (sulfur carrier)-H + 5'-deoxyadenosine + L-methionine + A + S-adenosyl-L-homocysteine + 2 H(+). Functionally, catalyzes the methylthiolation of an aspartic acid residue of ribosomal protein uS12. In Methylobacterium radiotolerans (strain ATCC 27329 / DSM 1819 / JCM 2831 / NBRC 15690 / NCIMB 10815 / 0-1), this protein is Ribosomal protein uS12 methylthiotransferase RimO.